We begin with the raw amino-acid sequence, 948 residues long: Isoleucine--tRNA ligase (948 aa).

Positions 58–68 (PYANGSIHIGH) match the 'HIGH' region motif. E572 is an L-isoleucyl-5'-AMP binding site. The 'KMSKS' region signature appears at 613 to 617 (KMSKS). K616 provides a ligand contact to ATP. Residues C911, C914, C931, and C934 each contribute to the Zn(2+) site.

Belongs to the class-I aminoacyl-tRNA synthetase family. IleS type 1 subfamily. In terms of assembly, monomer. The cofactor is Zn(2+).

Its subcellular location is the cytoplasm. The catalysed reaction is tRNA(Ile) + L-isoleucine + ATP = L-isoleucyl-tRNA(Ile) + AMP + diphosphate. In terms of biological role, catalyzes the attachment of isoleucine to tRNA(Ile). As IleRS can inadvertently accommodate and process structurally similar amino acids such as valine, to avoid such errors it has two additional distinct tRNA(Ile)-dependent editing activities. One activity is designated as 'pretransfer' editing and involves the hydrolysis of activated Val-AMP. The other activity is designated 'posttransfer' editing and involves deacylation of mischarged Val-tRNA(Ile). In Edwardsiella ictaluri (strain 93-146), this protein is Isoleucine--tRNA ligase.